The chain runs to 151 residues: Ubiquitin-conjugating enzyme E2 N (151 aa).

Residues 3–149 (SLPRRIIKET…AREWTQKYAV (147 aa)) enclose the UBC core domain. Cysteine 87 serves as the catalytic Glycyl thioester intermediate.

This sequence belongs to the ubiquitin-conjugating enzyme family.

The enzyme catalyses S-ubiquitinyl-[E1 ubiquitin-activating enzyme]-L-cysteine + [E2 ubiquitin-conjugating enzyme]-L-cysteine = [E1 ubiquitin-activating enzyme]-L-cysteine + S-ubiquitinyl-[E2 ubiquitin-conjugating enzyme]-L-cysteine.. Its pathway is protein modification; protein ubiquitination. Functionally, catalyzes the covalent attachment of ubiquitin to other proteins. The chain is Ubiquitin-conjugating enzyme E2 N (ben) from Drosophila melanogaster (Fruit fly).